The chain runs to 124 residues: Anamorsin homolog (124 aa).

The span at 1 to 20 shows a compositional bias: polar residues; it reads MSSPAPSTSHNAANSTQAFS. Disordered stretches follow at residues 1 to 39 and 40 to 124; these read MSSP…EDRE and AKST…TDDI. [2Fe-2S] cluster contacts are provided by cysteine 49, cysteine 56, cysteine 59, and cysteine 61. The interval 49–61 is fe-S binding site A; that stretch reads CATRRRACKNCTC. The [4Fe-4S] cluster site is built by cysteine 86, cysteine 89, cysteine 97, and cysteine 100. 2 short sequence motifs (cx2C motif) span residues 86–89 and 97–100; these read CGNC and CAGC. A fe-S binding site B region spans residues 86-100; the sequence is CGNCAKGDAFRCAGC.

It belongs to the anamorsin family. As to quaternary structure, monomer. The cofactor is [2Fe-2S] cluster. It depends on [4Fe-4S] cluster as a cofactor.

It is found in the cytoplasm. Its subcellular location is the mitochondrion intermembrane space. Component of the cytosolic iron-sulfur (Fe-S) protein assembly (CIA) machinery. Required for the maturation of extramitochondrial Fe-S proteins. Part of an electron transfer chain functioning in an early step of cytosolic Fe-S biogenesis, facilitating the de novo assembly of a [4Fe-4S] cluster on the cytosolic Fe-S scaffold complex. Electrons are transferred from NADPH via a FAD- and FMN-containing diflavin oxidoreductase. Together with the diflavin oxidoreductase, also required for the assembly of the diferric tyrosyl radical cofactor of ribonucleotide reductase (RNR), probably by providing electrons for reduction during radical cofactor maturation in the catalytic small subunit. The chain is Anamorsin homolog from Trypanosoma brucei brucei (strain 927/4 GUTat10.1).